Consider the following 492-residue polypeptide: MTLWINGDWITGQGERRRKTNPVSAEILWQGNDANAAQVAEACQAARAAFPCWARQPFAARQAIVEKFAALLEAHKADLTEVIARETGKPRWEAATEVTAMINKIAISIKAYHARTGAQKSELVDGAATLRHRPHGVLAVFGPYNFPGHLPNGHIVPALLAGNTLIFKPSELTPWTGETVIKLWERAGLPAGVLNLVQGGRETGQALSSLDDLDGLLFTGSASTGYQLHRQLSGQPEKILALEMGGNNPLIIEDVANIDAAVHLTLQSAFITAGQRCTCARRLLVKQGAQGDAFLARLVDIAGRLQPGRWDDDPQPFIGGLISAQAAQHVMEAWRQREALGGRTLLAPRKVKEGTSLLTPGIIELTGVADVPDEEVFGPLLNVWRYAHFDEAIRLANNTRFGLSCGLVSTDRAQFEQLLLEARAGIVNWNKPLTGAASTAPFGGVGASGNHRPSAWYAADYCAWPMASLESPELTLPATLSPGLDFSRREAV.

NAD(+) is bound at residue 220-225 (GSASTG). Residues E243 and C277 contribute to the active site.

The protein belongs to the aldehyde dehydrogenase family. AstD subfamily.

It catalyses the reaction N-succinyl-L-glutamate 5-semialdehyde + NAD(+) + H2O = N-succinyl-L-glutamate + NADH + 2 H(+). The protein operates within amino-acid degradation; L-arginine degradation via AST pathway; L-glutamate and succinate from L-arginine: step 4/5. Catalyzes the NAD-dependent reduction of succinylglutamate semialdehyde into succinylglutamate. The chain is N-succinylglutamate 5-semialdehyde dehydrogenase from Salmonella paratyphi B (strain ATCC BAA-1250 / SPB7).